Here is a 350-residue protein sequence, read N- to C-terminus: Secreted effector protein PipB2 (350 aa).

4 consecutive Pentapeptide repeat domains span residues alanine 162–glycine 201, threonine 202–glycine 241, cysteine 247–aspartate 286, and alanine 287–histidine 326.

Interacts with the host kinesin light chain (KLC), a subunit of the kinesin-1 motor complex.

It is found in the secreted. The protein resides in the host membrane. Its function is as follows. Effector proteins function to alter host cell physiology and promote bacterial survival in host tissues. Involved in the reorganization of late endosome/lysosome (LE/Lys) compartments in mammalian cells. Necessary and sufficient to link kinesin-1 onto the Salmonella-containing vacuole (SCV) membrane. Required for centrifugal extension of lysosomal glycoprotein-rich membrane tubules, known as Salmonella-induced filaments (Sifs), away from the SCV and toward the cell periphery. Required for virulence, but not for intracellular survival and replication in phagocytic cells. This Salmonella choleraesuis (strain SC-B67) protein is Secreted effector protein PipB2 (pipB2).